The sequence spans 189 residues: Peptidyl-tRNA hydrolase (189 aa).

A tRNA-binding site is contributed by Tyr-14. Catalysis depends on His-19, which acts as the Proton acceptor. Residues Phe-64, Asn-66, and Asn-112 each contribute to the tRNA site.

This sequence belongs to the PTH family. Monomer.

The protein localises to the cytoplasm. The catalysed reaction is an N-acyl-L-alpha-aminoacyl-tRNA + H2O = an N-acyl-L-amino acid + a tRNA + H(+). Its function is as follows. Hydrolyzes ribosome-free peptidyl-tRNAs (with 1 or more amino acids incorporated), which drop off the ribosome during protein synthesis, or as a result of ribosome stalling. Catalyzes the release of premature peptidyl moieties from peptidyl-tRNA molecules trapped in stalled 50S ribosomal subunits, and thus maintains levels of free tRNAs and 50S ribosomes. The polypeptide is Peptidyl-tRNA hydrolase (Erythrobacter litoralis (strain HTCC2594)).